A 389-amino-acid chain; its full sequence is Alkanesulfonate monooxygenase (389 aa).

Belongs to the SsuD family.

The catalysed reaction is an alkanesulfonate + FMNH2 + O2 = an aldehyde + FMN + sulfite + H2O + 2 H(+). In terms of biological role, catalyzes the desulfonation of aliphatic sulfonates. The protein is Alkanesulfonate monooxygenase of Rhizobium etli (strain CIAT 652).